A 45-amino-acid polypeptide reads, in one-letter code: Large ribosomal subunit protein bL34 (45 aa).

Belongs to the bacterial ribosomal protein bL34 family.

The protein is Large ribosomal subunit protein bL34 of Streptomyces avermitilis (strain ATCC 31267 / DSM 46492 / JCM 5070 / NBRC 14893 / NCIMB 12804 / NRRL 8165 / MA-4680).